We begin with the raw amino-acid sequence, 185 residues long: Ribosome-recycling factor (185 aa).

The segment at 140–168 is disordered; the sequence is KKEQKDGNITEDEQRNLEKQVQKITDDST.

The protein belongs to the RRF family.

The protein resides in the cytoplasm. Its function is as follows. Responsible for the release of ribosomes from messenger RNA at the termination of protein biosynthesis. May increase the efficiency of translation by recycling ribosomes from one round of translation to another. In Lactobacillus helveticus (strain DPC 4571), this protein is Ribosome-recycling factor.